Here is a 483-residue protein sequence, read N- to C-terminus: Glutamyl-tRNA(Gln) amidotransferase subunit A (483 aa).

Active-site charge relay system residues include lysine 77 and serine 152. The active-site Acyl-ester intermediate is serine 176.

The protein belongs to the amidase family. GatA subfamily. In terms of assembly, heterotrimer of A, B and C subunits.

It catalyses the reaction L-glutamyl-tRNA(Gln) + L-glutamine + ATP + H2O = L-glutaminyl-tRNA(Gln) + L-glutamate + ADP + phosphate + H(+). In terms of biological role, allows the formation of correctly charged Gln-tRNA(Gln) through the transamidation of misacylated Glu-tRNA(Gln) in organisms which lack glutaminyl-tRNA synthetase. The reaction takes place in the presence of glutamine and ATP through an activated gamma-phospho-Glu-tRNA(Gln). The protein is Glutamyl-tRNA(Gln) amidotransferase subunit A of Shouchella clausii (strain KSM-K16) (Alkalihalobacillus clausii).